Reading from the N-terminus, the 325-residue chain is Psp operon transcriptional activator (325 aa).

One can recognise a Sigma-54 factor interaction domain in the interval 15–237 (FLEVLEQVSH…ELKNVVERSV (223 aa)). ATP is bound by residues 36–43 (GERGTGKE) and 99–108 (ADGGTLFLDE). A DNA-binding region (H-T-H motif) is located at residues 302-321 (QKRAAELLGLTYHQFRALLK).

As to quaternary structure, forms a complex with PspA, which is composed of around 6 PspF subunits and 6 PspA subunits.

It is found in the cytoplasm. Its activity is regulated as follows. ATPase activity is inhibited by interaction with PspA. Under inducing conditions, the interaction is disrupted, allowing activation of psp transcription. In terms of biological role, transcriptional activator for the phage shock protein (psp) operon (pspABCDE) and pspG gene. This Escherichia coli (strain K12) protein is Psp operon transcriptional activator (pspF).